The primary structure comprises 206 residues: Large ribosomal subunit protein uL4 (206 aa).

The protein belongs to the universal ribosomal protein uL4 family. As to quaternary structure, part of the 50S ribosomal subunit.

Functionally, one of the primary rRNA binding proteins, this protein initially binds near the 5'-end of the 23S rRNA. It is important during the early stages of 50S assembly. It makes multiple contacts with different domains of the 23S rRNA in the assembled 50S subunit and ribosome. Its function is as follows. Forms part of the polypeptide exit tunnel. This is Large ribosomal subunit protein uL4 from Methylobacterium radiotolerans (strain ATCC 27329 / DSM 1819 / JCM 2831 / NBRC 15690 / NCIMB 10815 / 0-1).